A 37-amino-acid chain; its full sequence is Large ribosomal subunit protein bL36 (37 aa).

The protein belongs to the bacterial ribosomal protein bL36 family.

The polypeptide is Large ribosomal subunit protein bL36 (Vibrio atlanticus (strain LGP32) (Vibrio splendidus (strain Mel32))).